Consider the following 212-residue polypeptide: uncharacterized protein (212 aa).

Positions 46–198 constitute an SIS domain; the sequence is LERVYREKRK…IYSLMTRLGI (153 aa).

Belongs to the SIS family. PHI subfamily.

This is an uncharacterized protein from Aeropyrum pernix (strain ATCC 700893 / DSM 11879 / JCM 9820 / NBRC 100138 / K1).